The chain runs to 510 residues: MATVGPRTGPNAGAEALALAAELQGEATCSICLEFFREPVSVECGHSFCRACIMRCWERPGAGTGTATRTLPCPLPCPQCREPARPSQLRPNRQLAAVVSLLRRFSLPPTAPGERGTPAVPARAAAARCSQHGEQLKLYCQDDGRAICVVCDRAREHRSHAVLPLEEAVQEAKELLDSRLRALKKVLEDYEAFRSTEERESKELLKQMAAEKEKVGAEFQALRAFLVEQEGRLLSRLEVLSREVTQKQNENLAQLEGEITQLSKLSGQIQETAQKPDLDFLQEFKSTLSKCSSVPSSKPTTVSSEMKNKVWNVSLKSFVLKGLLKKFKEDLQGELEKEEKVELTLDPDTANPRLILSLDLKSVRLGQRAQDLPNHPRRFDTNTRVLASCGFSSGRHHWEVEVGSKDGWAFGVARESVRRKGLTPFTPEEGVWAMQLNNGQYWAVTSPERTQLNCGHLSRVRVALDLEVGAVSFYAVEDMRHLYTFRVNFQERVFPLFSVCSTGTYLRIWP.

The RING-type zinc-finger motif lies at 29–81; it reads CSICLEFFREPVSVECGHSFCRACIMRCWERPGAGTGTATRTLPCPLPCPQCR. The residue at position 106 (Ser-106) is a Phosphoserine; by RPS6KA5. The segment at 124–165 adopts a B box-type zinc-finger fold; the sequence is AAAARCSQHGEQLKLYCQDDGRAICVVCDRAREHRSHAVLPL. Positions 129, 132, 151, and 157 each coordinate Zn(2+). Residues 165-275 are a coiled coil; that stretch reads LEEAVQEAKE…SGQIQETAQK (111 aa). Residues 323-510 form the B30.2/SPRY domain; that stretch reads LLKKFKEDLQ…STGTYLRIWP (188 aa).

Belongs to the TRIM/RBCC family. In terms of assembly, forms homodimers. Interacts with GNIP2. Interacts with GYG1. Interacts with RNF187 (via C-terminus). Post-translationally, phosphorylated at Ser-106 by RPS6KA5/MSK1, which stimulates the ubiquitin ligase activity. In terms of processing, auto-ubiquitinates via 'Lys-63'-linked polyubiquitination. As to expression, highly expressed in antigen-presenting cells.

The protein resides in the nucleus. It is found in the cytoplasm. Its subcellular location is the golgi apparatus. The catalysed reaction is S-ubiquitinyl-[E2 ubiquitin-conjugating enzyme]-L-cysteine + [acceptor protein]-L-lysine = [E2 ubiquitin-conjugating enzyme]-L-cysteine + N(6)-ubiquitinyl-[acceptor protein]-L-lysine.. It participates in protein modification; protein ubiquitination. In terms of biological role, E3 ubiquitin-protein ligase that have both tumor-promoting and tumor-suppressing activities and functions in several biological processes including innate immunity, regulation of ferroptosis as well as cell proliferation and migration. Acts as an antiviral effector against multiple viruses by targeting specific viral proteins for ubiquitination and degradation including norovirus NTPase protein. Mechanistically, recognizes the C-terminal glutamine-containing motif generated by viral proteases that process the polyproteins and trigger their ubiquitination and subsequent degradation. Mediates 'Lys-63'-linked polyubiquitination and stabilization of the JUN coactivator RNF187 in response to growth factor signaling via the MEK/ERK pathway, thereby regulating JUN transactivation and cellular proliferation. Promotes the TLR4-mediated signaling activation through its E3 ligase domain leading to production of pro-inflammatory cytokines and type I interferon. Also plays a negative role in the regulation of exogenous cytosolic DNA virus-triggered immune response. Mechanistically, enhances the 'Lys-48'-linked ubiquitination of STING1 leading to its proteasome-dependent degradation. Mediates the ubiquitination of the SIN3-HDAC chromatin remodeling complex component BRMS1. Modulates NCOA4-mediated ferritinophagy and ferroptosis in glioblastoma cells by ubiquitinating NCOA4, leading to its degradation. The protein is E3 ubiquitin-protein ligase TRIM7 (Trim7) of Mus musculus (Mouse).